We begin with the raw amino-acid sequence, 399 residues long: Acetate kinase (399 aa).

N7 contributes to the Mg(2+) binding site. ATP is bound at residue K14. Position 91 (R91) interacts with substrate. Catalysis depends on D148, which acts as the Proton donor/acceptor. Residues 208–212 (HLGNG), 283–285 (DFR), and 331–335 (GLGEN) each bind ATP. Position 384 (E384) interacts with Mg(2+).

This sequence belongs to the acetokinase family. Homodimer. Mg(2+) serves as cofactor. Mn(2+) is required as a cofactor.

It is found in the cytoplasm. The catalysed reaction is acetate + ATP = acetyl phosphate + ADP. Its pathway is metabolic intermediate biosynthesis; acetyl-CoA biosynthesis; acetyl-CoA from acetate: step 1/2. Functionally, catalyzes the formation of acetyl phosphate from acetate and ATP. Can also catalyze the reverse reaction. The protein is Acetate kinase of Desulfitobacterium hafniense (strain Y51).